A 295-amino-acid polypeptide reads, in one-letter code: GTPase Era (295 aa).

An Era-type G domain is found at 4 to 171; it reads KSGFVTIIGR…IKQIVSFLPE (168 aa). Residues 12 to 19 are G1; sequence GRPNVGKS. Position 12–19 (12–19) interacts with GTP; the sequence is GRPNVGKS. The tract at residues 38–42 is G2; that stretch reads QTTRN. Residues 59–62 form a G3 region; it reads DTPG. GTP-binding positions include 59 to 63 and 121 to 124; these read DTPGI and NKID. Positions 121-124 are G4; the sequence is NKID. Residues 150-152 are G5; that stretch reads ISA. The KH type-2 domain maps to 202-280; it reads LDQEIPHGIA…FLELWVKVNE (79 aa).

This sequence belongs to the TRAFAC class TrmE-Era-EngA-EngB-Septin-like GTPase superfamily. Era GTPase family. In terms of assembly, monomer.

It is found in the cytoplasm. It localises to the cell membrane. Functionally, an essential GTPase that binds both GDP and GTP, with rapid nucleotide exchange. Plays a role in 16S rRNA processing and 30S ribosomal subunit biogenesis and possibly also in cell cycle regulation and energy metabolism. This is GTPase Era from Alkaliphilus metalliredigens (strain QYMF).